The primary structure comprises 207 residues: MQNSDSGKKTFLIGITGMIGGGKSTATKILEEMGCFGINADRLAKRYTEPDSPILIELVELLGSEILDEQGKPDRKKISEIVFNNPKKLSRLNQLIHPLVRKDFQKILETTAKGKMVIWEVPLLFETDAYTLCDATVTVDSDPEESILRTISRDKVKKEDVLARIKNQLPLTEKLKRADYILRNRGNIDSLREECKSLYSTLLGKML.

The DPCK domain maps to 12–207; that stretch reads LIGITGMIGG…LYSTLLGKML (196 aa). 20 to 25 is a binding site for ATP; sequence GGGKST.

It belongs to the CoaE family.

It is found in the cytoplasm. The enzyme catalyses 3'-dephospho-CoA + ATP = ADP + CoA + H(+). The protein operates within cofactor biosynthesis; coenzyme A biosynthesis; CoA from (R)-pantothenate: step 5/5. Catalyzes the phosphorylation of the 3'-hydroxyl group of dephosphocoenzyme A to form coenzyme A. This Leptospira interrogans serogroup Icterohaemorrhagiae serovar copenhageni (strain Fiocruz L1-130) protein is Dephospho-CoA kinase.